The sequence spans 481 residues: MSVRVRIAPSPTGNLHIGTARTAVFNWLFARRHQGQFILRIEDTDLERSRSEYTDNILTGLQWLGLNWDEGPFYQTQRLDLYKAAVQQLLDSGKAYRCYCTEAELEALRESQRARNEAPRYDNRHRDLTPEQEAAFQAEGREAVIRFRIDDDREIAWTDLVRDRVVWKGSDLGGDMVIARRSPAGTIGQPLYNLAVVVDDIDMTISHVIRGEDHIANTAKQILLYEALGAAVPEFAHTPLILNKEGRKLSKRDGVTSISDFQNLGYLPEAIANYMTLLGWSPVEGMDERFSLAEAATVFDFDRVNKAGAKFDWDKLNWLNSQVIKEKSASELVALLQPFWSKAGVDTAAYPAAWLEELATLLGPSLVTLTDIVGQSQLFFSQGIELQEDAIAQLGQAGSKAVLQQILEALPSEALTLEVAKGLIDQAVKAAGVKKGIGMRSLRAALMGSMQGPDLLTSWVLLHQAGQAQPRLQAAIAAAQG.

The 'HIGH' region signature appears at 9–19 (PSPTGNLHIGT). Residues cysteine 98, cysteine 100, histidine 125, and aspartate 127 each coordinate Zn(2+). The 'KMSKS' region signature appears at 248–252 (KLSKR). Position 251 (lysine 251) interacts with ATP.

This sequence belongs to the class-I aminoacyl-tRNA synthetase family. Glutamate--tRNA ligase type 1 subfamily. Monomer. Zn(2+) serves as cofactor.

The protein resides in the cytoplasm. The enzyme catalyses tRNA(Glu) + L-glutamate + ATP = L-glutamyl-tRNA(Glu) + AMP + diphosphate. Functionally, catalyzes the attachment of glutamate to tRNA(Glu) in a two-step reaction: glutamate is first activated by ATP to form Glu-AMP and then transferred to the acceptor end of tRNA(Glu). The sequence is that of Glutamate--tRNA ligase from Synechococcus elongatus (strain ATCC 33912 / PCC 7942 / FACHB-805) (Anacystis nidulans R2).